A 383-amino-acid chain; its full sequence is Neuropeptide Y receptor type 1 (383 aa).

Residues 1-34 lie on the Extracellular side of the membrane; it reads MNSTSFSQLENHSVHYNLSEEKPSFFAFENDDCH. N-linked (GlcNAc...) asparagine glycosylation is found at Asn-2, Asn-11, and Asn-17. The chain crosses the membrane as a helical span at residues 35 to 55; that stretch reads LPLAVIFTLALAYGAVIILGV. Residues 56–87 lie on the Cytoplasmic side of the membrane; it reads SGNLALILIILKQKEMRNVTNILIVNLSFSDL. A helical transmembrane segment spans residues 88-108; sequence LVAIMCLPFTFVYTLMDHWIF. Topologically, residues 109-116 are extracellular; the sequence is GEIMCKLN. A disulfide bridge links Cys-113 with Cys-198. A helical transmembrane segment spans residues 117-137; that stretch reads PFVQCVSITVSIFSLVLIAVE. Topologically, residues 138-154 are cytoplasmic; it reads RHQLIINPRGWRPNNRH. Residues 155–175 form a helical membrane-spanning segment; that stretch reads AYIGIAVIWVLAVASSLPFMI. Residues 176-211 are Extracellular-facing; the sequence is YQVLTDEPFQNVTLDAFKDKLVCFDQFPSDSHRLSY. A helical transmembrane segment spans residues 212 to 232; sequence TTLLLVLQYFGPLCFIFICYF. Topologically, residues 233 to 260 are cytoplasmic; sequence KIYIRLKRRNNMMDKMRDSKYRSSESKR. Residues 261–281 traverse the membrane as a helical segment; it reads INIMLLSIVVAFAVCWLPLTI. Over 282-299 the chain is Extracellular; sequence FNTVFDWNHQIIATCNHN. Residues 300–320 traverse the membrane as a helical segment; sequence LLFLLCHLTAMISTCVNPIFY. The Cytoplasmic portion of the chain corresponds to 321-383; sequence GFLNKNFQRD…KISCVENEKI (63 aa). The S-palmitoyl cysteine moiety is linked to residue Cys-338. Phosphoserine occurs at positions 368 and 376.

It belongs to the G-protein coupled receptor 1 family.

Its subcellular location is the cell membrane. Functionally, receptor for neuropeptide Y and peptide YY. This is Neuropeptide Y receptor type 1 (NPY1R) from Cavia porcellus (Guinea pig).